The primary structure comprises 278 residues: MALKSFNPTTPSQRQLVIVDRASLYKGKPVKALTQGLSSKGGRNNQGRITVRFQGGGHKRTYRLVDFKRRKFDVEGTVERLEYDPNRTAFIALVTYTDGEQAYILAPQRLAAGDKVIASDKAVDVKPGNTMPLQYIPVGSIIHNVEMKPGKGGQIARSAGTYVQLVGRDAGMAILRLNSGEQRLVHGSCLASIGAVSNSDHGNINDGKAGRSRWRGKRPHVRGVVMNPVDHPHGGGEGRTSGGRHPVTPWGKPTKGKRTRSNKSTDKFIMRSRHQRKK.

The tract at residues 201–278 (HGNINDGKAG…IMRSRHQRKK (78 aa)) is disordered. Over residues 210 to 221 (GRSRWRGKRPHV) the composition is skewed to basic residues.

This sequence belongs to the universal ribosomal protein uL2 family. In terms of assembly, part of the 50S ribosomal subunit. Forms a bridge to the 30S subunit in the 70S ribosome.

Functionally, one of the primary rRNA binding proteins. Required for association of the 30S and 50S subunits to form the 70S ribosome, for tRNA binding and peptide bond formation. It has been suggested to have peptidyltransferase activity; this is somewhat controversial. Makes several contacts with the 16S rRNA in the 70S ribosome. The sequence is that of Large ribosomal subunit protein uL2 from Agrobacterium fabrum (strain C58 / ATCC 33970) (Agrobacterium tumefaciens (strain C58)).